We begin with the raw amino-acid sequence, 150 residues long: Globin-5 (150 aa).

A Globin domain is found at 11-150; the sequence is PLSAAEKTKI…MICILLRSAY (140 aa). 2 residues coordinate heme b: His74 and His106.

It belongs to the globin family. In terms of assembly, monomer at high oxygen tension and high pH and dimeric at low oxygen tension and lower pH.

The protein is Globin-5 of Petromyzon marinus (Sea lamprey).